A 226-amino-acid chain; its full sequence is uncharacterized protein (226 aa).

This sequence to L.innocua lin1255, lin1742 and lin2408.

This is an uncharacterized protein from Listeria innocua serovar 6a (strain ATCC BAA-680 / CLIP 11262).